Reading from the N-terminus, the 217-residue chain is tRNA (guanine-N(7)-)-methyltransferase (217 aa).

The S-adenosyl-L-methionine site is built by E45, E70, D97, and D119. D119 is an active-site residue. Substrate is bound at residue K123. An interaction with RNA region spans residues 125–130 (RHEKRR). Residues D155 and 195–198 (TEYE) contribute to the substrate site.

Belongs to the class I-like SAM-binding methyltransferase superfamily. TrmB family.

It carries out the reaction guanosine(46) in tRNA + S-adenosyl-L-methionine = N(7)-methylguanosine(46) in tRNA + S-adenosyl-L-homocysteine. It functions in the pathway tRNA modification; N(7)-methylguanine-tRNA biosynthesis. Catalyzes the formation of N(7)-methylguanine at position 46 (m7G46) in tRNA. The sequence is that of tRNA (guanine-N(7)-)-methyltransferase from Lactobacillus helveticus (strain DPC 4571).